A 235-amino-acid chain; its full sequence is Futalosine hydrolase (235 aa).

Belongs to the PNP/UDP phosphorylase family. Futalosine hydrolase subfamily.

It carries out the reaction futalosine + H2O = dehypoxanthine futalosine + hypoxanthine. It participates in quinol/quinone metabolism; menaquinone biosynthesis. Catalyzes the hydrolysis of futalosine (FL) to dehypoxanthine futalosine (DHFL) and hypoxanthine, a step in the biosynthesis of menaquinone (MK, vitamin K2). Does not accept aminodeoxyfutalosine (AFL) as a substrate. The protein is Futalosine hydrolase of Streptomyces coelicolor (strain ATCC BAA-471 / A3(2) / M145).